We begin with the raw amino-acid sequence, 105 residues long: Cysteine-rich venom protein VAR2 (105 aa).

The first 22 residues, 1–22 (MILLKLYLTLAAILCQSRGTTS), serve as a signal peptide directing secretion.

The protein belongs to the CRISP family. In terms of processing, contains 8 disulfide bonds. In terms of tissue distribution, expressed by the venom gland.

It localises to the secreted. Functionally, blocks ryanodine receptors, and potassium channels. The polypeptide is Cysteine-rich venom protein VAR2 (Varanus acanthurus (Ridge-tailed monitor)).